A 126-amino-acid polypeptide reads, in one-letter code: Probable V-type proton ATPase subunit G (126 aa).

The segment at 23-45 (NEARKRKLQRTKQAKQEAQAEVE) is disordered. The span at 26 to 35 (RKRKLQRTKQ) shows a compositional bias: basic residues.

It belongs to the V-ATPase G subunit family. As to quaternary structure, V-ATPase is a heteromultimeric enzyme made up of two complexes: the ATP-hydrolytic V1 complex and the proton translocation V0 complex. The V1 complex consists of three catalytic AB heterodimers that form a heterohexamer, three peripheral stalks each consisting of EG heterodimers, one central rotor including subunits D and F, and the regulatory subunits C and H. The proton translocation complex V0 consists of the proton transport subunit a, a ring of proteolipid subunits c9c'', rotary subunit d, subunits e and f, and the accessory subunits vah-19/Ac45 and vah-20/PRR.

In terms of biological role, subunit of the V1 complex of vacuolar(H+)-ATPase (V-ATPase), a multisubunit enzyme composed of a peripheral complex (V1) that hydrolyzes ATP and a membrane integral complex (V0) that translocates protons. V-ATPase is responsible for acidifying and maintaining the pH of intracellular compartments and in some cell types, is targeted to the plasma membrane, where it is responsible for acidifying the extracellular environment. In neurons, required for necrotic cell death by promoting intracellular acidification. The sequence is that of Probable V-type proton ATPase subunit G from Caenorhabditis briggsae.